Consider the following 138-residue polypeptide: Growth factor (138 aa).

The signal sequence occupies residues 1-19 (MSMKYLMLLFAAMIIRSFA). N-linked (GlcNAc...) asparagine; by host glycosylation is present at Asn-34. Positions 41 to 81 (AIRLCGPEGDGYCLHGDCIHARDIDGMYCRCSHGYTGIRCQ) constitute an EGF-like domain. 3 disulfides stabilise this stretch: Cys-45–Cys-58, Cys-53–Cys-69, and Cys-71–Cys-80. Residue Asn-95 is glycosylated (N-linked (GlcNAc...) asparagine; by host).

The protein belongs to the orthopoxvirus OPG019 family.

The protein resides in the secreted. Its function is as follows. Stimulates cellular proliferation (hyperplasia)and mobility around infected cells to promote rapid and efficient spread of infection. The polypeptide is Growth factor (OPG019) (Rabbitpox virus (strain Utrecht) (RPV)).